We begin with the raw amino-acid sequence, 337 residues long: Ketol-acid reductoisomerase (NADP(+)) (337 aa).

Positions Met1–Thr180 constitute a KARI N-terminal Rossmann domain. Residues Tyr22 to Gln25, Arg46, Ser49, Ser51, and Asp81 to Gln84 contribute to the NADP(+) site. The active site involves His106. Gly132 contributes to the NADP(+) binding site. The 146-residue stretch at Thr181–Ile326 folds into the KARI C-terminal knotted domain. The Mg(2+) site is built by Asp189, Glu193, Glu225, and Glu229. Ser250 contributes to the substrate binding site.

Belongs to the ketol-acid reductoisomerase family. Requires Mg(2+) as cofactor.

The enzyme catalyses (2R)-2,3-dihydroxy-3-methylbutanoate + NADP(+) = (2S)-2-acetolactate + NADPH + H(+). It catalyses the reaction (2R,3R)-2,3-dihydroxy-3-methylpentanoate + NADP(+) = (S)-2-ethyl-2-hydroxy-3-oxobutanoate + NADPH + H(+). The protein operates within amino-acid biosynthesis; L-isoleucine biosynthesis; L-isoleucine from 2-oxobutanoate: step 2/4. It functions in the pathway amino-acid biosynthesis; L-valine biosynthesis; L-valine from pyruvate: step 2/4. In terms of biological role, involved in the biosynthesis of branched-chain amino acids (BCAA). Catalyzes an alkyl-migration followed by a ketol-acid reduction of (S)-2-acetolactate (S2AL) to yield (R)-2,3-dihydroxy-isovalerate. In the isomerase reaction, S2AL is rearranged via a Mg-dependent methyl migration to produce 3-hydroxy-3-methyl-2-ketobutyrate (HMKB). In the reductase reaction, this 2-ketoacid undergoes a metal-dependent reduction by NADPH to yield (R)-2,3-dihydroxy-isovalerate. The chain is Ketol-acid reductoisomerase (NADP(+)) from Pelagibacter ubique (strain HTCC1062).